Consider the following 102-residue polypeptide: Putative septation protein SpoVG 1 (102 aa).

The protein belongs to the SpoVG family.

Its function is as follows. Could be involved in septation. This chain is Putative septation protein SpoVG 1, found in Listeria monocytogenes serotype 4b (strain F2365).